The chain runs to 147 residues: Transcription antitermination protein NusB (147 aa).

This sequence belongs to the NusB family.

Functionally, involved in transcription antitermination. Required for transcription of ribosomal RNA (rRNA) genes. Binds specifically to the boxA antiterminator sequence of the ribosomal RNA (rrn) operons. The sequence is that of Transcription antitermination protein NusB from Legionella pneumophila (strain Paris).